We begin with the raw amino-acid sequence, 156 residues long: ATP synthase subunit b (156 aa).

Residues 11–31 form a helical membrane-spanning segment; that stretch reads AIAFVLFVMFCMKFVWPPIMA.

Belongs to the ATPase B chain family. In terms of assembly, F-type ATPases have 2 components, F(1) - the catalytic core - and F(0) - the membrane proton channel. F(1) has five subunits: alpha(3), beta(3), gamma(1), delta(1), epsilon(1). F(0) has three main subunits: a(1), b(2) and c(10-14). The alpha and beta chains form an alternating ring which encloses part of the gamma chain. F(1) is attached to F(0) by a central stalk formed by the gamma and epsilon chains, while a peripheral stalk is formed by the delta and b chains.

It is found in the cell inner membrane. Its function is as follows. F(1)F(0) ATP synthase produces ATP from ADP in the presence of a proton or sodium gradient. F-type ATPases consist of two structural domains, F(1) containing the extramembraneous catalytic core and F(0) containing the membrane proton channel, linked together by a central stalk and a peripheral stalk. During catalysis, ATP synthesis in the catalytic domain of F(1) is coupled via a rotary mechanism of the central stalk subunits to proton translocation. Functionally, component of the F(0) channel, it forms part of the peripheral stalk, linking F(1) to F(0). The protein is ATP synthase subunit b of Photorhabdus laumondii subsp. laumondii (strain DSM 15139 / CIP 105565 / TT01) (Photorhabdus luminescens subsp. laumondii).